The primary structure comprises 274 residues: Penicillin-insensitive murein endopeptidase (274 aa).

The first 19 residues, 1 to 19 (MKKTALALLALLVSSASLA), serve as a signal peptide directing secretion. 3 disulfides stabilise this stretch: C44-C265, C187-C235, and C216-C223. The Zn(2+) site is built by H110, H113, D120, D147, H150, and H211. Residues 225-274 (DQPLPPPGDGCGAELQSWFEPPEPGTTKPEKKTPPPLPPSCQALLDEHVL) form a disordered region.

Belongs to the peptidase M74 family. As to quaternary structure, dimer. It depends on Zn(2+) as a cofactor.

The protein resides in the periplasm. In terms of biological role, murein endopeptidase that cleaves the D-alanyl-meso-2,6-diamino-pimelyl amide bond that connects peptidoglycan strands. Likely plays a role in the removal of murein from the sacculus. In Citrobacter koseri (strain ATCC BAA-895 / CDC 4225-83 / SGSC4696), this protein is Penicillin-insensitive murein endopeptidase.